A 651-amino-acid chain; its full sequence is MATTQPCLIGQIIAVPQFHILFSPRNSLKPELSTNKRTNFSVSIGLRHSFASSISTCNPKAPSLSCLRNCAAVDGADTSSSEDKWDWDWDRWNRHFSEIEEVESVVSLLKSQLEDAVEKEDFEEAVKLKQAISEATVDDAVAEIMRQLQTAVNEERYHDASRLCNETGSGLVGWWVGLPRDSEEPFGRIVHITPGVGRFIGKSYSPRQLVAEAAGTPLFEIFVIKDTDGGYVMQVVYVQHVKQNLTISENSFSKVQQSSKSSINDPSILDVRGSELKVDKKEDTQLNAGEPTEEGIKNVIKFLKDKIPGLKLKVMDVIKIPEEEIVGSDDATEELVGEGTEETNSSDDEEEVEEEENDSIEAISSMDSADYGKHSNTKLVIGGVLHNIEDSSIDDEIVRVSANIMDTERDSFILHVPGRSKRDIDTRKNRVSKEQVTALAAQGLSDLLPPEVAEAFWGEKASLKVSKHVHEIVKLAINQAQKGNHLSEYTAFNRIITPESNLDPFDGLYVGAFGPYGTEIVQLKRKYGRWDDAEGSNSSDIEFFEYVEAVKLTGDPNVPAGQVTFRARIGNGSRMTNHGLFPEELGVLASYRGQGKIADFGFKKPRWVEGKLLKLNGKGMGPYVKGADLGFLYIGPEQSFLVLFNRLRLPE.

A chloroplast-targeting transit peptide spans 1 to 69 (MATTQPCLIG…KAPSLSCLRN (69 aa)). A UVR domain is found at 103–138 (ESVVSLLKSQLEDAVEKEDFEEAVKLKQAISEATVD). Residues 330-359 (DATEELVGEGTEETNSSDDEEEVEEEENDS) are disordered.

The protein resides in the plastid. It is found in the chloroplast. Together with EX1, enables higher plants to perceive singlet oxygen as a stress signal in plastid that activates a genetically determined nuclear stress response program which triggers a programmed cell death (PCD). This transfer of singlet oxygen-induced stress-related signals from the plastid to the nucleus that triggers genetically controlled PCD pathway is unique to photosynthetic eukaryotes and operates under mild stress conditions, impeding photosystem II (PSII) without causing photooxidative damage of the plant. In Arabidopsis thaliana (Mouse-ear cress), this protein is Protein EXECUTER 2, chloroplastic.